The sequence spans 285 residues: sn-2 palmitoyl-lipid 9-desaturase (285 aa).

The next 2 membrane-spanning stretches (helical) occupy residues 20-40 (WINV…PWFF) and 44-64 (ALGL…CLGY). The Histidine box-1 motif lies at 65–70 (HRLLSH). Residues 81 to 101 (YAIALIGALALQGGPIFWVGG) traverse the membrane as a helical segment. The Histidine box-2 signature appears at 102–106 (HRQHH). A helical membrane pass occupies residues 169–189 (IPFALLLYVLGGWPFVFYGVF). The Histidine box-3 motif lies at 239-243 (HHTYP).

It belongs to the fatty acid desaturase type 2 family. Fe(2+) is required as a cofactor.

Its subcellular location is the membrane. It catalyses the reaction a 1-acyl-2-hexadecanoyl-glycerolipid + 2 reduced [2Fe-2S]-[ferredoxin] + O2 + 2 H(+) = a 1-acyl-2-[(9Z)-hexadecenoyl]-glycerolipid + 2 oxidized [2Fe-2S]-[ferredoxin] + 2 H2O. It functions in the pathway lipid metabolism; fatty acid biosynthesis. In terms of biological role, desaturase involved in fatty acid biosynthesis. Introduces a double bond at carbon 9 of palmitoyl groups (16:0) attached to the sn-2 position of the glycerol moiety of membrane glycerolipids. This chain is sn-2 palmitoyl-lipid 9-desaturase, found in Nostoc sp. (strain 36).